A 128-amino-acid polypeptide reads, in one-letter code: Natriuretic peptides A (128 aa).

A disordered region spans residues 36–84 (QVASEQNEEAGAVLSALPEVPSWPGEAGPAQREGGALGRGPWDSSDRSA). Positions 68-78 (EGGALGRGPWD) are excised as a propeptide. A Phosphoserine modification is found at Ser-104. Cys-105 and Cys-121 form a disulfide bridge. The segment at 122 to 126 (NSFRY) is important for degradation of atrial natriuretic peptide by IDE.

It belongs to the natriuretic peptide family. As to quaternary structure, homodimer; disulfide-linked antiparallel dimer. In terms of processing, the precursor molecule is proteolytically cleaved by CORIN at Arg-98 to produce atrial natriuretic peptide. Undergoes further proteolytic cleavage by unknown proteases to give rise to long-acting natriuretic peptide, vessel dilator and kaliuretic peptide. Additional processing gives rise to the auriculin and atriopeptin peptides. In the kidneys, alternative processing by an unknown protease results in the peptide urodilatin. Post-translationally, cleavage by MME initiates degradation of the factor and thereby regulates its activity. Degraded by IDE (in vitro). During IDE degradation, the resulting products can temporarily stimulate NPR2 to produce cGMP, before the fragments are completely degraded and inactivated by IDE (in vitro). Degraded by IDE. In terms of processing, phosphorylation on Ser-104 decreases vasorelaxant activity.

The protein localises to the secreted. The protein resides in the perikaryon. Its subcellular location is the cell projection. In terms of biological role, hormone that plays a key role in mediating cardio-renal homeostasis, and is involved in vascular remodeling and regulating energy metabolism. Acts by specifically binding and stimulating NPR1 to produce cGMP, which in turn activates effector proteins, such as PRKG1, that drive various biological responses. Regulates vasodilation, natriuresis, diuresis and aldosterone synthesis and is therefore essential for regulating blood pressure, controlling the extracellular fluid volume and maintaining the fluid-electrolyte balance. Also involved in inhibiting cardiac remodeling and cardiac hypertrophy by inducing cardiomyocyte apoptosis and attenuating the growth of cardiomyocytes and fibroblasts. Plays a role in female pregnancy by promoting trophoblast invasion and spiral artery remodeling in uterus, and thus prevents pregnancy-induced hypertension. In adipose tissue, acts in various cGMP- and PKG-dependent pathways to regulate lipid metabolism and energy homeostasis. This includes up-regulating lipid metabolism and mitochondrial oxygen utilization by activating the AMP-activated protein kinase (AMPK), and increasing energy expenditure by acting via MAPK11 to promote the UCP1-dependent thermogenesis of brown adipose tissue. Binds the clearance receptor NPR3 which removes the hormone from circulation. Its function is as follows. May have a role in cardio-renal homeostasis through regulation of natriuresis, diuresis, vasodilation, and inhibiting aldosterone synthesis. In vitro, promotes the production of cGMP and induces vasodilation. May promote natriuresis, at least in part, by enhancing prostaglandin E2 synthesis resulting in the inhibition of renal Na+-K+-ATPase. However reports on the involvement of this peptide in mammal blood volume and blood pressure homeostasis are conflicting; according to a report, in vivo it is not sufficient to activate cGMP and does not inhibit collecting duct transport nor effect diuresis and natriuresis. Appears to bind to specific receptors that are distinct from the receptors bound by atrial natriuretic peptide and vessel dilator. Possibly enhances protein excretion in urine by decreasing proximal tubular protein reabsorption. May have a role in cardio-renal homeostasis through regulation of natriuresis, diuresis, and vasodilation. In vitro, promotes the production of cGMP and induces vasodilation. May promote natriuresis, at least in part, by enhancing prostaglandin E2 synthesis resulting in the inhibition of renal Na+-K+-ATPase. However reports on the involvement of this peptide in mammal blood volume and blood pressure homeostasis are conflicting; according to a report it is not sufficient to activate cGMP and does not inhibit collecting duct transport nor effect diuresis and natriuresis. Appears to bind to specific receptors that are distinct from the receptors bound by the atrial natriuretic and long-acting natriuretic peptides. Possibly functions in protein excretion in urine by maintaining the integrity of the proximal tubules and enhancing protein excretion by decreasing proximal tubular protein reabsorption. Functionally, may have a role in cardio-renal homeostasis through regulation of diuresis and inhibiting aldosterone synthesis. In vitro, promotes the production of cGMP and induces vasodilation. May promote natriuresis, at least in part, by enhancing prostaglandin E2 synthesis resulting in the inhibition of renal Na+-K+-ATPase. May have a role in potassium excretion but not sodium excretion (natriuresis). Possibly enhances protein excretion in urine by decreasing proximal tubular protein reabsorption. In terms of biological role, hormone produced in the kidneys that appears to be important for maintaining cardio-renal homeostasis. Mediates vasodilation, natriuresis and diuresis primarily in the renal system, in order to maintain the extracellular fluid volume and control the fluid-electrolyte balance. Specifically binds and stimulates cGMP production by renal transmembrane receptors, likely NPR1. Urodilatin not ANP, may be the natriuretic peptide responsible for the regulation of sodium and water homeostasis in the kidney. Its function is as follows. May have a role in cardio-renal homeostasis through regulation of natriuresis and vasodilation. In vivo promotes natriuresis and in vitro, vasodilates renal artery strips. May have a role in cardio-renal homeostasis through regulation of regulation of natriuresis and vasodilation. In vivo promotes natriuresis. In vitro, vasodilates intestinal smooth muscle but not smooth muscle strips. Functionally, may have a role in cardio-renal homeostasis through regulation of natriuresis and vasodilation. In vivo promotes natriuresis. In vitro, selectively vasodilates intestinal and vascular smooth muscle strips. In terms of biological role, may have a role in cardio-renal homeostasis through regulation of natriuresis and vasodilation. In vivo promotes natriuresis. In vitro, selectively vasodilates intestinal smooth muscle but not vascular smooth muscle strips. The protein is Natriuretic peptides A (NPPA) of Cavia porcellus (Guinea pig).